A 372-amino-acid chain; its full sequence is GDP-mannose 4,6-dehydratase (372 aa).

NADP(+) is bound by residues 9-14 (GVTGQD), 64-65 (DL), 86-90 (LGAQS), and Tyr-101. The active site involves Thr-133. Residues Glu-135 and Tyr-157 each act as nucleophile in the active site. Lys-161, His-187, and Arg-192 together coordinate NADP(+).

Belongs to the NAD(P)-dependent epimerase/dehydratase family. GDP-mannose 4,6-dehydratase subfamily. NADP(+) is required as a cofactor.

It carries out the reaction GDP-alpha-D-mannose = GDP-4-dehydro-alpha-D-rhamnose + H2O. The protein operates within nucleotide-sugar biosynthesis; GDP-L-fucose biosynthesis via de novo pathway; GDP-L-fucose from GDP-alpha-D-mannose: step 1/2. In terms of biological role, catalyzes the conversion of GDP-D-mannose to GDP-4-dehydro-6-deoxy-D-mannose. This chain is GDP-mannose 4,6-dehydratase, found in Vibrio cholerae.